Consider the following 138-residue polypeptide: Translation initiation factor 2 subunit beta (138 aa).

It belongs to the eIF-2-beta/eIF-5 family. As to quaternary structure, heterotrimer composed of an alpha, a beta and a gamma chain.

Functionally, eIF-2 functions in the early steps of protein synthesis by forming a ternary complex with GTP and initiator tRNA. The protein is Translation initiation factor 2 subunit beta of Methanococcus maripaludis (strain DSM 14266 / JCM 13030 / NBRC 101832 / S2 / LL).